We begin with the raw amino-acid sequence, 373 residues long: 4-hydroxy-3-methylbut-2-en-1-yl diphosphate synthase (flavodoxin) (373 aa).

Positions 269, 272, 304, and 311 each coordinate [4Fe-4S] cluster.

The protein belongs to the IspG family. The cofactor is [4Fe-4S] cluster.

The catalysed reaction is (2E)-4-hydroxy-3-methylbut-2-enyl diphosphate + oxidized [flavodoxin] + H2O + 2 H(+) = 2-C-methyl-D-erythritol 2,4-cyclic diphosphate + reduced [flavodoxin]. It participates in isoprenoid biosynthesis; isopentenyl diphosphate biosynthesis via DXP pathway; isopentenyl diphosphate from 1-deoxy-D-xylulose 5-phosphate: step 5/6. In terms of biological role, converts 2C-methyl-D-erythritol 2,4-cyclodiphosphate (ME-2,4cPP) into 1-hydroxy-2-methyl-2-(E)-butenyl 4-diphosphate. The protein is 4-hydroxy-3-methylbut-2-en-1-yl diphosphate synthase (flavodoxin) of Baumannia cicadellinicola subsp. Homalodisca coagulata.